Here is a 187-residue protein sequence, read N- to C-terminus: Large ribosomal subunit protein uL6 (187 aa).

The interval Glu-151–Lys-170 is disordered.

The protein belongs to the universal ribosomal protein uL6 family. In terms of assembly, part of the 50S ribosomal subunit.

In terms of biological role, this protein binds to the 23S rRNA, and is important in its secondary structure. It is located near the subunit interface in the base of the L7/L12 stalk, and near the tRNA binding site of the peptidyltransferase center. This is Large ribosomal subunit protein uL6 from Chloroflexus aurantiacus (strain ATCC 29366 / DSM 635 / J-10-fl).